A 479-amino-acid chain; its full sequence is Zinc finger and SCAN domain-containing protein 26 (479 aa).

A Glycyl lysine isopeptide (Lys-Gly) (interchain with G-Cter in SUMO2) cross-link involves residue Lys17. Residues 51–133 form the SCAN box domain; the sequence is CKRFRQLRYE…VFLEDLQLEL (83 aa). The segment at 155 to 187 is disordered; the sequence is TAPGKATPERQVQPEGDVPQPEREKGEAKRIEN. A compositionally biased stretch (basic and acidic residues) spans 174-187; sequence QPEREKGEAKRIEN. The C2H2-type 1; degenerate zinc finger occupies 232–254; sequence CKCSEYGQAFFQHSDLIKHESSH. C2H2-type zinc fingers lie at residues 283-305, 311-333, 339-361, 367-389, 395-417, 423-445, and 451-473; these read HQCH…QKIH, YQCK…LRIH, YLCI…QRIH, CQCK…QRIH, HQCN…HRIH, FKCT…VRIH, and YKCN…QRYH.

The protein resides in the nucleus. Functionally, may be involved in transcriptional regulation. This is Zinc finger and SCAN domain-containing protein 26 (ZSCAN26) from Bos taurus (Bovine).